A 415-amino-acid chain; its full sequence is Mitochondrial tRNA-specific 2-thiouridylase 1 (415 aa).

Residues 37–44 (AMSGGVDS) and methionine 63 each bind ATP. The interaction with target base in tRNA stretch occupies residues 124–126 (NPD). Residue cysteine 129 is the Nucleophile of the active site. A disulfide bond links cysteine 129 and cysteine 234. Residue glycine 159 participates in ATP binding. An interaction with tRNA region spans residues 183-185 (KDQ). The active-site Cysteine persulfide intermediate is cysteine 234. The tract at residues 356–357 (RH) is interaction with tRNA.

The protein belongs to the MnmA/TRMU family.

The protein localises to the mitochondrion. It catalyses the reaction 5-taurinomethyluridine(34) in tRNA + S-sulfanyl-L-cysteinyl-[protein] + AH2 + ATP = 5-taurinomethyl-2-thiouridine(34) in tRNA + L-cysteinyl-[protein] + A + AMP + diphosphate + H(+). In terms of biological role, catalyzes the 2-thiolation of uridine at the wobble position (U34) of mitochondrial tRNA(Lys), tRNA(Glu) and tRNA(Gln). Required for the formation of 5-taurinomethyl-2-thiouridine (tm5s2U) of mitochondrial tRNA(Lys), tRNA(Glu), and tRNA(Gln) at the wobble position. ATP is required to activate the C2 atom of the wobble base. The chain is Mitochondrial tRNA-specific 2-thiouridylase 1 from Schizosaccharomyces pombe (strain 972 / ATCC 24843) (Fission yeast).